The chain runs to 252 residues: MLAKRIIPCLDTIGKKVVKGTSFINVRVVGDAKELARRYEKEGADEIVLLDITASEEGRSTFVDVVTDVASELFVPLTVGGGIKNIEDVRRLLKAGADKVSINTSAVENPDLINQIASEFGSQCLVVAIDVKRRGKKSWEVYIKGGKVPTGIDFKDWVIEVEKRGAGEILLTSIDADGHLSGYDYELLEYALSYSNLPLIASGGAGSLEDLYKALKIGVDAVLAASIFHFGTYSIPEVKRYLREKGIWVRLD.

Active-site residues include aspartate 11 and aspartate 130.

This sequence belongs to the HisA/HisF family. As to quaternary structure, heterodimer of HisH and HisF.

Its subcellular location is the cytoplasm. The enzyme catalyses 5-[(5-phospho-1-deoxy-D-ribulos-1-ylimino)methylamino]-1-(5-phospho-beta-D-ribosyl)imidazole-4-carboxamide + L-glutamine = D-erythro-1-(imidazol-4-yl)glycerol 3-phosphate + 5-amino-1-(5-phospho-beta-D-ribosyl)imidazole-4-carboxamide + L-glutamate + H(+). It participates in amino-acid biosynthesis; L-histidine biosynthesis; L-histidine from 5-phospho-alpha-D-ribose 1-diphosphate: step 5/9. Functionally, IGPS catalyzes the conversion of PRFAR and glutamine to IGP, AICAR and glutamate. The HisF subunit catalyzes the cyclization activity that produces IGP and AICAR from PRFAR using the ammonia provided by the HisH subunit. In Dictyoglomus turgidum (strain DSM 6724 / Z-1310), this protein is Imidazole glycerol phosphate synthase subunit HisF.